The sequence spans 205 residues: Putative 3-methyladenine DNA glycosylase (205 aa).

It belongs to the DNA glycosylase MPG family.

In Bacillus cereus (strain ATCC 14579 / DSM 31 / CCUG 7414 / JCM 2152 / NBRC 15305 / NCIMB 9373 / NCTC 2599 / NRRL B-3711), this protein is Putative 3-methyladenine DNA glycosylase.